The following is a 493-amino-acid chain: Ketol-acid reductoisomerase (NADP(+)) (493 aa).

The KARI N-terminal Rossmann domain maps to 17–208 (LSQCRFMDRS…GGDRAGVLHS (192 aa)). Residues 45–48 (CGAQ), Arg68, Arg76, Ser78, and 108–110 (DKQ) contribute to the NADP(+) site. His132 is a catalytic residue. NADP(+) is bound at residue Gly158. KARI C-terminal knotted domains are found at residues 209–344 (SFIA…NAPS) and 345–486 (SNEH…MKDM). Mg(2+) is bound by residues Asp217, Glu221, Glu389, and Glu393. Substrate is bound at residue Ser414.

The protein belongs to the ketol-acid reductoisomerase family. Requires Mg(2+) as cofactor.

The enzyme catalyses (2R)-2,3-dihydroxy-3-methylbutanoate + NADP(+) = (2S)-2-acetolactate + NADPH + H(+). It carries out the reaction (2R,3R)-2,3-dihydroxy-3-methylpentanoate + NADP(+) = (S)-2-ethyl-2-hydroxy-3-oxobutanoate + NADPH + H(+). It functions in the pathway amino-acid biosynthesis; L-isoleucine biosynthesis; L-isoleucine from 2-oxobutanoate: step 2/4. It participates in amino-acid biosynthesis; L-valine biosynthesis; L-valine from pyruvate: step 2/4. Involved in the biosynthesis of branched-chain amino acids (BCAA). Catalyzes an alkyl-migration followed by a ketol-acid reduction of (S)-2-acetolactate (S2AL) to yield (R)-2,3-dihydroxy-isovalerate. In the isomerase reaction, S2AL is rearranged via a Mg-dependent methyl migration to produce 3-hydroxy-3-methyl-2-ketobutyrate (HMKB). In the reductase reaction, this 2-ketoacid undergoes a metal-dependent reduction by NADPH to yield (R)-2,3-dihydroxy-isovalerate. This Shewanella amazonensis (strain ATCC BAA-1098 / SB2B) protein is Ketol-acid reductoisomerase (NADP(+)).